Reading from the N-terminus, the 69-residue chain is Protein SlyX homolog (69 aa).

Belongs to the SlyX family.

The chain is Protein SlyX homolog from Pseudomonas paraeruginosa (strain DSM 24068 / PA7) (Pseudomonas aeruginosa (strain PA7)).